We begin with the raw amino-acid sequence, 1702 residues long: Dicer-like protein 4 (1702 aa).

Disordered regions lie at residues 1–52 and 89–120; these read MRDE…SAAT and SSSS…EKDP. Residues 17-31 show a composition bias toward basic and acidic residues; it reads GKRDREQKNCEEEKN. Over residues 89–105 the composition is skewed to low complexity; it reads SSSSVSSFSSSSSSLFS. One can recognise a Helicase ATP-binding domain in the interval 131–307; the sequence is LCKKATEENV…SENLSKSINS (177 aa). Residue 144–151 coordinates ATP; the sequence is LGTGCGKT. A DECH box motif is present at residues 251-254; it reads DECH. Positions 475–629 constitute a Helicase C-terminal domain; the sequence is QLIKILSVFR…RMNLEITYRS (155 aa). The region spanning 656-748 is the Dicer dsRNA-binding fold domain; that stretch reads SISLLYKYCS…LPDSKDEIED (93 aa). One can recognise a PAZ domain in the interval 932 to 1054; it reads LVEDIFPPSG…IPPELSHLKI (123 aa). 2 RNase III domains span residues 1083-1251 and 1292-1436; these read ELKH…VDSG and LETL…LDCG. Mg(2+) is bound by residues Glu-1330, Asp-1422, and Glu-1425. DRBM domains follow at residues 1462 to 1528 and 1621 to 1697; these read SPIK…NLKA and TAKS…CLKH.

The protein belongs to the helicase family. Dicer subfamily. Interacts with DRB4. Requires Mg(2+) as cofactor. Mn(2+) is required as a cofactor.

It is found in the nucleus. Ribonuclease (RNase) III involved in RNA-mediated post-transcriptional gene silencing (PTGS). Functions in the biogenesis of trans-acting small interfering RNAs (ta-siRNAs, derived from the TAS1, TAS2 or TAS3 endogenous transcripts) by cleaving small dsRNAs into 21-24 nucleotide ta-siRNAs. Functions with the dsRNA-binding protein DRB4 in ta-siRNAs processing. Acts in the RDR6/SGS3/DCL4/AGO7 ta-siRNA pathway involved in leaf developmental timing. Plays a role in transitive silencing of transgenes by processing secondary siRNAs. This pathway, which requires DCL2 and RDR6, amplifies silencing by using the target RNA as substrate to generate secondary siRNAs, providing an efficient mechanism for long-distance silencing. Required for the production of the 30-40 nucleotide bacterial-induced long siRNAs (lsiRNA). May participate with DCL3 in the production of 24 nucleotide repeat-associated siRNAs (ra-siRNAs) which derive from heterochromatin and DNA repeats such as transposons. Plays an important role in antiviral RNA silencing. Involved in the production of viral siRNAs derived from the cucumber mosaic virus (CMV), turnip crinkle virus (TCV) and tobacco rattle virus (TRV). Targeted by the viral silencing suppressor (VSR) protein 2b of the cucumber mosaic virus (CMV) that inactivates DCL4 function in RNA silencing. Does not seem to be involved in microRNAs (miRNAs) processing. This chain is Dicer-like protein 4 (DCL4), found in Arabidopsis thaliana (Mouse-ear cress).